We begin with the raw amino-acid sequence, 255 residues long: Ribosomal RNA small subunit methyltransferase G (255 aa).

S-adenosyl-L-methionine-binding positions include Gly89, Phe94, 112–114 (DST), 140–141 (VE), and Arg159.

The protein belongs to the methyltransferase superfamily. RNA methyltransferase RsmG family.

The protein localises to the cytoplasm. Its function is as follows. Specifically methylates the N7 position of a guanine in 16S rRNA. This is Ribosomal RNA small subunit methyltransferase G from Trichodesmium erythraeum (strain IMS101).